We begin with the raw amino-acid sequence, 409 residues long: Sex-determination protein fem-3 (409 aa).

In terms of assembly, component of a complex containing fem-1, fem-2 and fem-3. Interacts with fem-1 and fem-2 (via N-terminus). Part of a E3 ubiquitin-protein ligase complex, at least composed of cul-2, elc-1, tra-1, fem-1, fem-2 and fem-3; mediates the ubiquitination and subsequent proteasomal degradation of tra-1. Interacts with sel-10. Interacts with tra-2.

Its function is as follows. Required for male development. In XO (male) animals, fem-3 directs male differentiation in all tissues. In XX (hermaphrodite animals), it specifies the first 80 or so germ cells to be sperm. Negatively regulates male development when bound to tra-2. In Caenorhabditis briggsae, this protein is Sex-determination protein fem-3.